The primary structure comprises 266 residues: Glutamate racemase (266 aa).

Substrate is bound by residues 10–11 and 42–43; these read DS and YG. The Proton donor/acceptor role is filled by C73. 74 to 75 lines the substrate pocket; it reads NT. C183 functions as the Proton donor/acceptor in the catalytic mechanism. Position 184-185 (184-185) interacts with substrate; sequence TH.

The protein belongs to the aspartate/glutamate racemases family.

The enzyme catalyses L-glutamate = D-glutamate. It participates in cell wall biogenesis; peptidoglycan biosynthesis. In terms of biological role, provides the (R)-glutamate required for cell wall biosynthesis. This chain is Glutamate racemase, found in Lactobacillus johnsonii (strain CNCM I-12250 / La1 / NCC 533).